The chain runs to 478 residues: Septin-4 (478 aa).

Residues 1-115 form a disordered region; the sequence is MDHSLGWQGN…RSPWGKLDPY (115 aa). Residues serine 28, serine 29, and serine 68 each carry the phosphoserine modification. Over residues 84–93 the composition is skewed to polar residues; sequence PQPSDSQQYF. A compositionally biased stretch (low complexity) spans 94–108; that stretch reads SAPAPLSPSSRPRSP. 2 positions are modified to phosphoserine: serine 117 and serine 118. One can recognise a Septin-type G domain in the interval 141-414; the sequence is KGFDFTLMVA…ENYRAQCIQS (274 aa). The segment at 151–158 is G1 motif; the sequence is GESGLGKS. Residues 151 to 158 and threonine 185 contribute to the GTP site; that span reads GESGLGKS. Residues 208–211 form a G3 motif region; it reads DTPG. The tract at residues 289 to 292 is G4 motif; that stretch reads AKAD. 290 to 298 contacts GTP; it reads KADTLTPPE. The residue at position 325 (serine 325) is a Phosphoserine. Residues glycine 348 and arginine 363 each contribute to the GTP site. The interval 428–449 is disordered; it reads LTRESGTDFPIPAVPPGTDPET. Position 432 is a phosphoserine (serine 432). Phosphothreonine is present on threonine 434. Positions 447 to 478 form a coiled coil; the sequence is PETEKLIREKDEELRRMQEMLHKIQRQMKETH.

This sequence belongs to the TRAFAC class TrmE-Era-EngA-EngB-Septin-like GTPase superfamily. Septin GTPase family. As to quaternary structure, septins polymerize into heterooligomeric protein complexes that form filaments, and can associate with cellular membranes, actin filaments and microtubules. GTPase activity is required for filament formation. Interacts with SEPTIN8. Component of a septin core octameric complex consisting of SEPTIN12, SEPTIN7, SEPTIN6 and SEPTIN2 or SEPTIN4 in the order 12-7-6-2-2-6-7-12 or 12-7-6-4-4-6-7-12. Interacts with SEPTIN14 (via C-terminus). Interacts with DYRK1A. Interacts with SLC6A3/DAT and SNCA/alpha-synuclein. Interacts with STX1A; in the striatum. Interacts with XIAP (via BIR3 domain) following the induction of apoptosis. Interacts with AREL1 (via HECT domain); in the cytoplasm following induction of apoptosis. In terms of assembly, interacts with DPYSL5. Phosphorylated by DYRK1A. Post-translationally, ubiquitinated by AREL1. In terms of processing, may be phosphorylated. In terms of tissue distribution, expressed in the cerebral cortex, striatum, midbrain, cerebellum and spinal cord (at protein level). Expressed in the substantia nigra pars compacta, ventral tegmental area, projection fiber bundles and in axon terminals surrounding striatal neurons (at protein level). Expressed in hair follicle stem cells (at protein level). Expressed in small intestinal crypts; abundantly expressed at the crypt base (at protein level). Widely expressed in the brain and to a lesser extent in the testis, lung and liver. Highly expressed in the brain and testis and, to a lesser extent in the heart, lung and kidney. In the brain, abundant in areas of high cell density, particularly in the stria terminalis. Expressed in the entorhinal, temporal and visual cortices and the hippocampus of the brain where is colocalizes with DYRK1A in postnatal day 1 and adult mice. Expressed and extensively colocalizes with DYRK1A in apical dendrites of pyramidal cells. As to expression, predominantly expressed in embryonic brain and dorsal root ganglion neurons. In terms of tissue distribution, expressed in LGR5-positive intestinal stem cells and lysozyme-positive Paneth cells (at protein level). Expressed in the brain and testis.

It is found in the cytoplasm. Its subcellular location is the cell projection. The protein resides in the cilium. The protein localises to the flagellum. It localises to the cytoplasmic vesicle. It is found in the secretory vesicle. Its subcellular location is the axon. The protein resides in the dendrite. The protein localises to the perikaryon. It localises to the synapse. It is found in the mitochondrion. Its subcellular location is the cytosol. Functionally, filament-forming cytoskeletal GTPase. Pro-apoptotic protein involved in LGR5-positive intestinal stem cell and Paneth cell expansion in the intestines, via its interaction with XIAP. May also play a role in the regulation of cell fate in the intestine. Positive regulator of apoptosis involved in hematopoietic stem cell homeostasis; via its interaction with XIAP. Negative regulator of repair and hair follicle regeneration in response to injury, due to inhibition of hair follicle stem cell proliferation, potentially via its interaction with XIAP. Plays an important role in male fertility and sperm motility. During spermiogenesis, essential for the establishment of the annulus (a fibrous ring structure connecting the midpiece and the principal piece of the sperm flagellum) which is a requisite for the structural and mechanical integrity of the sperm. Involved in the migration of cortical neurons and the formation of neuron leading processes during embryonic development. Required for dopaminergic metabolism in presynaptic autoreceptors; potentially via activity as a presynaptic scaffold protein. This is Septin-4 from Mus musculus (Mouse).